The following is a 232-amino-acid chain: U-scoloptoxin(11)-Sa3a (232 aa).

The first 21 residues, 1-21, serve as a signal peptide directing secretion; the sequence is MFQFCLLILLLAPGRFFSALG.

Belongs to the scoloptoxin-11 family. Contains 8 disulfide bonds. Expressed by the venom gland.

It localises to the secreted. The sequence is that of U-scoloptoxin(11)-Sa3a from Scolopendra alternans (Florida Keys giant centipede).